Reading from the N-terminus, the 311-residue chain is Malate dehydrogenase (311 aa).

NAD(+) contacts are provided by residues 7-13 (GAAGGIG) and D34. Substrate-binding residues include R81 and R87. NAD(+) is bound by residues N94 and 117 to 119 (ITN). Residues N119 and R153 each contribute to the substrate site. Catalysis depends on H177, which acts as the Proton acceptor. M227 is an NAD(+) binding site.

Belongs to the LDH/MDH superfamily. MDH type 1 family. Homodimer.

It catalyses the reaction (S)-malate + NAD(+) = oxaloacetate + NADH + H(+). Catalyzes the reversible oxidation of malate to oxaloacetate. The protein is Malate dehydrogenase of Shewanella baltica (strain OS155 / ATCC BAA-1091).